The primary structure comprises 674 residues: DNA ligase (674 aa).

NAD(+) is bound by residues 34-38 (DFEFD), 83-84 (SL), and Glu117. The active-site N6-AMP-lysine intermediate is the Lys119. NAD(+)-binding residues include Arg140, Glu184, Lys297, and Lys321. 4 residues coordinate Zn(2+): Cys415, Cys418, Cys433, and Cys439. The BRCT domain maps to 598-674 (LVNTNFEGQS…IDEDEFERML (77 aa)).

The protein belongs to the NAD-dependent DNA ligase family. LigA subfamily. Mg(2+) serves as cofactor. The cofactor is Mn(2+).

The catalysed reaction is NAD(+) + (deoxyribonucleotide)n-3'-hydroxyl + 5'-phospho-(deoxyribonucleotide)m = (deoxyribonucleotide)n+m + AMP + beta-nicotinamide D-nucleotide.. Functionally, DNA ligase that catalyzes the formation of phosphodiester linkages between 5'-phosphoryl and 3'-hydroxyl groups in double-stranded DNA using NAD as a coenzyme and as the energy source for the reaction. It is essential for DNA replication and repair of damaged DNA. The protein is DNA ligase of Chlorobaculum parvum (strain DSM 263 / NCIMB 8327) (Chlorobium vibrioforme subsp. thiosulfatophilum).